Consider the following 527-residue polypeptide: MSNNTYQHVSNESRYVKFDPTDTNFPPEITDVQAAIAAISPAGVNGVPDASSTTKGILFIPTEQEVIDGTNNTKAVTPATLATRLSYPNATETVYGLTRYSTNDEAIAGVNNESSITPAKFTVALNNAFETRVSTESSNGVIKISSLPQALAGADDTTAMTPLKTQQLAIKLIAQIAPSETTATESDQGVVQLATVAQVRQGTLREGYAISPYTFMNSSSTEEYKGVIKLGTQSEVNSNNASVAVTGATLNGRGSTTSMRGVVKLTTTAGSQSGGDASSALAWNADVIQQRGGQIIYGTLRIEDTFTIANGGANITGTVRMTGGYIQGNRIVTQNEIDRTIPVGAIMMWAADSLPSDAWRFCHGGTVSASDCPLYASRIGTRYGGNPSNPGLPDMRGLFVRGSGRGSHLTNPNVNGNDQFGKPRLGVGCTGGYVGEVQIQQMSYHKHAGGFGEHDDLGAFGNTRRSNFVGTRKGLDWDNRSYFTNDGYEIDPESQRNSKYTLNRPELIGNETRPWNISLNYIIKVKE.

The protein belongs to the tevenvirinae short tail fiber protein family. Homotrimer.

It is found in the virion. Functionally, structural component of the short tail fiber. Adhesion protein that binds irreversibly to the lipopolysaccharides component (LPS) on the cell surface of Escherichia coli B strains during virus attachment. After at least three long tail fibers have bound, short tail fibers extend and bind irreversibly to the core region of the host cell LPS. The protein is Short tail fiber protein gp12 (12) of Escherichia coli (Bacteriophage T4).